A 261-amino-acid polypeptide reads, in one-letter code: tRNA pseudouridine synthase A (261 aa).

The active-site Nucleophile is the Asp-51. A substrate-binding site is contributed by Tyr-109.

It belongs to the tRNA pseudouridine synthase TruA family. As to quaternary structure, homodimer.

The catalysed reaction is uridine(38/39/40) in tRNA = pseudouridine(38/39/40) in tRNA. Its function is as follows. Formation of pseudouridine at positions 38, 39 and 40 in the anticodon stem and loop of transfer RNAs. This Shewanella baltica (strain OS223) protein is tRNA pseudouridine synthase A.